The chain runs to 247 residues: ATP synthase subunit a, chloroplastic (247 aa).

A run of 5 helical transmembrane segments spans residues 38 to 58 (QVLI…TLAV), 95 to 115 (VPFI…GALL), 134 to 154 (INTT…AGIS), 199 to 219 (LVVV…VMFL), and 220 to 240 (GLFT…AYIG).

It belongs to the ATPase A chain family. F-type ATPases have 2 components, CF(1) - the catalytic core - and CF(0) - the membrane proton channel. CF(1) has five subunits: alpha(3), beta(3), gamma(1), delta(1), epsilon(1). CF(0) has four main subunits: a, b, b' and c.

The protein resides in the plastid. It is found in the chloroplast thylakoid membrane. Key component of the proton channel; it plays a direct role in the translocation of protons across the membrane. The polypeptide is ATP synthase subunit a, chloroplastic (Daucus carota (Wild carrot)).